A 338-amino-acid polypeptide reads, in one-letter code: MLKPLFGKADKTPADVVKNLRDALLVIDRHGTNTSERKVEKAIEETAKMLALAKTFIYGSDANEPNNEQVTQLAQEVYNANVLPMLIKHLHKFEFECKKDVASVFNNLLRRQIGTRSPTVEYLAARPEILITLLLGYEQPDIALTCGSMLREAVRHEHLARIVLYSEYFQRFFVFVQSDVFDIATDAFSTFKDLMTKHKNMCAEYLDNNYDRFFGQYSALTNSENYVTRRQSLKLLGELLLDRHNFSTMNKYITSPENLKTVMELLRDKRRNIQYEAFHVFKIFVANPNKPRPITDILTRNRDKLVEFLTAFHNDRTNDEQFNDEKAYLIKQIQELRV.

Belongs to the Mo25 family.

The protein resides in the cytoplasm. It is found in the cytoskeleton. The protein localises to the spindle pole. Functionally, regulates asymmetric cell division in Q.p neuroblast lineage. Plays a role in cell shedding during embryogenesis. The protein is MO25-like protein 2 (mop-25.2) of Caenorhabditis elegans.